We begin with the raw amino-acid sequence, 396 residues long: Glyceraldehyde-3-phosphate dehydrogenase GAPA1, chloroplastic (396 aa).

Residues M1–A60 constitute a chloroplast transit peptide. Residues R71–I72, D95, and R140 contribute to the NADP(+) site. Residues S212 to T214, T243, R258, T271 to G272, and R294 contribute to the D-glyceraldehyde 3-phosphate site. C213 (nucleophile) is an active-site residue. N376 contributes to the NADP(+) binding site.

Belongs to the glyceraldehyde-3-phosphate dehydrogenase family. As to quaternary structure, tetramer of either four A chains (GAPDH 2) or two A and two B chains (GAPDH 1). Expressed in leaves and stems.

The protein localises to the plastid. Its subcellular location is the chloroplast membrane. It localises to the chloroplast stroma. The catalysed reaction is D-glyceraldehyde 3-phosphate + phosphate + NADP(+) = (2R)-3-phospho-glyceroyl phosphate + NADPH + H(+). It functions in the pathway carbohydrate biosynthesis; Calvin cycle. Its function is as follows. Involved in the photosynthetic reductive pentose phosphate pathway (Calvin-Benson cycle). Catalyzes the reduction of 1,3-diphosphoglycerate by NADPH. The sequence is that of Glyceraldehyde-3-phosphate dehydrogenase GAPA1, chloroplastic (GAPA1) from Arabidopsis thaliana (Mouse-ear cress).